A 285-amino-acid polypeptide reads, in one-letter code: Glutamate racemase (285 aa).

Substrate-binding positions include 28 to 29 (DS) and 60 to 61 (YG). Cys-92 serves as the catalytic Proton donor/acceptor. 93-94 (NT) serves as a coordination point for substrate. Cys-204 functions as the Proton donor/acceptor in the catalytic mechanism. 205-206 (TH) is a substrate binding site.

The protein belongs to the aspartate/glutamate racemases family.

The enzyme catalyses L-glutamate = D-glutamate. It participates in cell wall biogenesis; peptidoglycan biosynthesis. In terms of biological role, provides the (R)-glutamate required for cell wall biosynthesis. This is Glutamate racemase from Escherichia coli O7:K1 (strain IAI39 / ExPEC).